A 111-amino-acid chain; its full sequence is SPbeta prophage-derived uncharacterized protein YolC (111 aa).

The signal sequence occupies residues 1 to 25 (MKKRLIGFLVLVPALIMSGITLIEA).

This is SPbeta prophage-derived uncharacterized protein YolC (yolC) from Bacillus subtilis (strain 168).